The following is a 361-amino-acid chain: Histidine biosynthesis bifunctional protein HisB (361 aa).

The tract at residues 1–172 is histidinol-phosphatase; it reads MTQPTLFIDR…PKTTACKRPP (172 aa). Aspartate 9 serves as the catalytic Nucleophile. Mg(2+)-binding residues include aspartate 9 and aspartate 11. The active-site Proton donor is aspartate 11. Zn(2+) is bound by residues cysteine 92, histidine 94, cysteine 100, and cysteine 102. Mg(2+) is bound at residue aspartate 129. The interval 173-361 is imidazoleglycerol-phosphate dehydratase; sequence RYAEVVRTTK…NELPSSKGVL (189 aa).

This sequence in the N-terminal section; belongs to the histidinol-phosphatase family. It in the C-terminal section; belongs to the imidazoleglycerol-phosphate dehydratase family. It depends on Mg(2+) as a cofactor. Requires Zn(2+) as cofactor.

It localises to the cytoplasm. It catalyses the reaction D-erythro-1-(imidazol-4-yl)glycerol 3-phosphate = 3-(imidazol-4-yl)-2-oxopropyl phosphate + H2O. The catalysed reaction is L-histidinol phosphate + H2O = L-histidinol + phosphate. Its pathway is amino-acid biosynthesis; L-histidine biosynthesis; L-histidine from 5-phospho-alpha-D-ribose 1-diphosphate: step 6/9. It functions in the pathway amino-acid biosynthesis; L-histidine biosynthesis; L-histidine from 5-phospho-alpha-D-ribose 1-diphosphate: step 8/9. In Actinobacillus pleuropneumoniae serotype 3 (strain JL03), this protein is Histidine biosynthesis bifunctional protein HisB.